Reading from the N-terminus, the 128-residue chain is Arginine decarboxylase proenzyme (128 aa).

The active-site Schiff-base intermediate with substrate; via pyruvic acid is Ser76. Ser76 carries the post-translational modification Pyruvic acid (Ser); by autocatalysis. The Proton acceptor; for processing activity role is filled by His81. Cys96 serves as the catalytic Proton donor; for catalytic activity.

It belongs to the prokaryotic AdoMetDC family. Type 1 subfamily. Heterooctamer of four alpha and four beta chains arranged as a tetramer of alpha/beta heterodimers. Pyruvate is required as a cofactor. Post-translationally, is synthesized initially as an inactive proenzyme. Formation of the active enzyme involves a self-maturation process in which the active site pyruvoyl group is generated from an internal serine residue via an autocatalytic post-translational modification. Two non-identical subunits are generated from the proenzyme in this reaction, and the pyruvate is formed at the N-terminus of the alpha chain, which is derived from the carboxyl end of the proenzyme. The post-translation cleavage follows an unusual pathway, termed non-hydrolytic serinolysis, in which the side chain hydroxyl group of the serine supplies its oxygen atom to form the C-terminus of the beta chain, while the remainder of the serine residue undergoes an oxidative deamination to produce ammonia and the pyruvoyl group blocking the N-terminus of the alpha chain.

It catalyses the reaction L-arginine + H(+) = agmatine + CO2. It participates in amine and polyamine biosynthesis; agmatine biosynthesis; agmatine from L-arginine: step 1/1. In terms of biological role, specifically catalyzes the decarboxylation of L-arginine to agmatine. Has no S-adenosylmethionine decarboxylase (AdoMetDC) activity. This Sulfurisphaera tokodaii (strain DSM 16993 / JCM 10545 / NBRC 100140 / 7) (Sulfolobus tokodaii) protein is Arginine decarboxylase proenzyme.